The following is a 460-amino-acid chain: Arginine decarboxylase (460 aa).

Residue Lys226 is modified to N6-(pyridoxal phosphate)lysine.

It belongs to the Orn/Lys/Arg decarboxylase class-I family. Pyridoxal 5'-phosphate is required as a cofactor.

It localises to the cytoplasm. The catalysed reaction is L-arginine + H(+) = agmatine + CO2. It functions in the pathway amine and polyamine biosynthesis; agmatine biosynthesis; agmatine from L-arginine: step 1/1. Catalyzes the formation of agmatine from arginine. The polypeptide is Arginine decarboxylase (speA) (Bacillus cereus (strain ATCC 14579 / DSM 31 / CCUG 7414 / JCM 2152 / NBRC 15305 / NCIMB 9373 / NCTC 2599 / NRRL B-3711)).